The primary structure comprises 31 residues: MSDIN-like toxin proprotein 8 (31 aa).

Positions M1–P10 are excised as a propeptide. Residues C11–P18 constitute a cross-link (cyclopeptide (Cys-Pro)). Residues S19–G31 constitute a propeptide that is removed on maturation.

It belongs to the MSDIN fungal toxin family. Processed by the macrocyclase-peptidase enzyme POPB to yield a toxic cyclic octapeptide. POPB first removes 10 residues from the N-terminus. Conformational trapping of the remaining peptide forces the enzyme to release this intermediate rather than proceed to macrocyclization. The enzyme rebinds the remaining peptide in a different conformation and catalyzes macrocyclization of the N-terminal 8 residues.

In terms of biological role, probable toxin that belongs to the MSDIN-like toxin family responsible for a large number of food poisoning cases and deaths. In Amanita bisporigera (Destroying angel), this protein is MSDIN-like toxin proprotein 8.